The sequence spans 662 residues: UvrABC system protein B (662 aa).

In terms of domain architecture, Helicase ATP-binding spans 25–411 (DGIIAGDKFQ…STRIVEQVIR (387 aa)). 38-45 (GVTGSGKT) contacts ATP. A Beta-hairpin motif is present at residues 91–114 (YYDYYQPEAYVPARDLYIEKDASI). Residues 428–594 (QMEHIYGEVK…TIKKAIEDIL (167 aa)) form the Helicase C-terminal domain. In terms of domain architecture, UVR spans 625–660 (KKLIKKLEAQMAEYADMLMFEEAAVIRDKIEEVKRI).

Belongs to the UvrB family. As to quaternary structure, forms a heterotetramer with UvrA during the search for lesions. Interacts with UvrC in an incision complex.

The protein resides in the cytoplasm. Its function is as follows. The UvrABC repair system catalyzes the recognition and processing of DNA lesions. A damage recognition complex composed of 2 UvrA and 2 UvrB subunits scans DNA for abnormalities. Upon binding of the UvrA(2)B(2) complex to a putative damaged site, the DNA wraps around one UvrB monomer. DNA wrap is dependent on ATP binding by UvrB and probably causes local melting of the DNA helix, facilitating insertion of UvrB beta-hairpin between the DNA strands. Then UvrB probes one DNA strand for the presence of a lesion. If a lesion is found the UvrA subunits dissociate and the UvrB-DNA preincision complex is formed. This complex is subsequently bound by UvrC and the second UvrB is released. If no lesion is found, the DNA wraps around the other UvrB subunit that will check the other stand for damage. The sequence is that of UvrABC system protein B from Treponema denticola (strain ATCC 35405 / DSM 14222 / CIP 103919 / JCM 8153 / KCTC 15104).